The following is a 258-amino-acid chain: Undecaprenyl-diphosphatase (258 aa).

The next 8 membrane-spanning stretches (helical) occupy residues 1–21 (MSII…FLPV), 42–62 (LKCF…FTFF), 71–91 (LWIK…LLYS), 96–116 (LFSQ…FIVV), 134–154 (GISY…MVPG), 173–193 (QTAA…ATFY), 211–231 (LFLL…KMFL), and 237–257 (FDYI…MFFV).

It belongs to the UppP family.

It localises to the cell inner membrane. The catalysed reaction is di-trans,octa-cis-undecaprenyl diphosphate + H2O = di-trans,octa-cis-undecaprenyl phosphate + phosphate + H(+). In terms of biological role, catalyzes the dephosphorylation of undecaprenyl diphosphate (UPP). Confers resistance to bacitracin. In Campylobacter hominis (strain ATCC BAA-381 / DSM 21671 / CCUG 45161 / LMG 19568 / NCTC 13146 / CH001A), this protein is Undecaprenyl-diphosphatase.